Here is a 94-residue protein sequence, read N- to C-terminus: Neurotoxin LmNaTx45.2 (94 aa).

An N-terminal signal peptide occupies residues 1-18; sequence MKLAILSLFLVFQIGVES. An LCN-type CS-alpha/beta domain is found at 20 to 86; that stretch reads KNGFALDHYG…IGDSRKNYCD (67 aa). Disulfide bonds link Cys-34-Cys-85, Cys-44-Cys-63, Cys-48-Cys-65, and Cys-59-Cys-85.

The protein belongs to the long (4 C-C) scorpion toxin superfamily. Sodium channel inhibitor family. Beta subfamily. In terms of tissue distribution, expressed by the venom gland.

The protein localises to the secreted. Binds voltage-independently at site-4 of sodium channels (Nav) and shift the voltage of activation toward more negative potentials thereby affecting sodium channel activation and promoting spontaneous and repetitive firing. The protein is Neurotoxin LmNaTx45.2 of Lychas mucronatus (Chinese swimming scorpion).